Reading from the N-terminus, the 397-residue chain is Protein ROH1D (397 aa).

Residues 247-267 (LIVPVYTMTTVLLFVMWALVA) form a helical membrane-spanning segment.

It belongs to the ROH1 family. As to quaternary structure, interacts with EXO70C2. In terms of tissue distribution, mostly expressed in mature pollen.

Its subcellular location is the membrane. It localises to the cytoplasm. It is found in the cytosol. In terms of biological role, involved in the regulation of plant growth, and modulates pollen development to ensure male fertility. May also affect the composition of the inner seed coat mucilage layer. This chain is Protein ROH1D, found in Arabidopsis thaliana (Mouse-ear cress).